A 337-amino-acid chain; its full sequence is Protein BIG GRAIN 1-like (337 aa).

Disordered stretches follow at residues 1 to 32 (MRDMEMRWAAPAPATRGRGRARRRAPDQPSFS), 120 to 163 (SAAG…RPAS), and 179 to 233 (KRPS…ARPS). Residues 137-146 (HEQPDVEKTA) are compositionally biased toward basic and acidic residues. Composition is skewed to low complexity over residues 150–163 (PGSASARACRRPAS), 195–209 (PACSTAPPSSSSSYA), and 219–230 (RTPPTTTTTARA).

The protein belongs to the BIG GRAIN 1 (BG1) plant protein family.

Its subcellular location is the cell membrane. In terms of biological role, involved in auxin transport. Regulator of the auxin signaling pathway. The chain is Protein BIG GRAIN 1-like from Oryza sativa subsp. indica (Rice).